A 539-amino-acid chain; its full sequence is UDP-N-acetylmuramate--L-alanine ligase (539 aa).

Residue 165 to 171 coordinates ATP; the sequence is GTHGKTT.

It belongs to the MurCDEF family.

It is found in the cytoplasm. It catalyses the reaction UDP-N-acetyl-alpha-D-muramate + L-alanine + ATP = UDP-N-acetyl-alpha-D-muramoyl-L-alanine + ADP + phosphate + H(+). It participates in cell wall biogenesis; peptidoglycan biosynthesis. Its function is as follows. Cell wall formation. The polypeptide is UDP-N-acetylmuramate--L-alanine ligase (Trichodesmium erythraeum (strain IMS101)).